Here is a 158-residue protein sequence, read N- to C-terminus: Probable transcription regulator ArfM (158 aa).

Functionally, activates, in anaerobic conditions, the transcription of the fermentative operons lctEP and alsDS, of the hmp gene encoding a flavohemoglobin-like protein, the nitrite reductase operon nasDE and the heme biosynthesis genes hemN and hemZ. The sequence is that of Probable transcription regulator ArfM (arfM) from Bacillus subtilis (strain 168).